The primary structure comprises 1545 residues: Pentafunctional AROM polypeptide (1545 aa).

The segment at 1–383 is 3-dehydroquinate synthase; that stretch reads MSGLIEKVSI…YEPKASYVND (383 aa). Residues 44 to 46, 82 to 85, 113 to 115, and D118 each bind NAD(+); these read DSN, EANK, and GGV. R129 contacts 7-phospho-2-dehydro-3-deoxy-D-arabino-heptonate. 138–139 lines the NAD(+) pocket; that stretch reads TS. 7-phospho-2-dehydro-3-deoxy-D-arabino-heptonate is bound by residues D145 and K151. K160 contributes to the NAD(+) binding site. N161 contacts 7-phospho-2-dehydro-3-deoxy-D-arabino-heptonate. NAD(+) contacts are provided by residues 178–181 and N189; that span reads FLET. E193 provides a ligand contact to Zn(2+). Residues 193–196 and K249 contribute to the 7-phospho-2-dehydro-3-deoxy-D-arabino-heptonate site; that span reads EVVK. The Proton acceptor; for 3-dehydroquinate synthase activity role is filled by E259. 7-phospho-2-dehydro-3-deoxy-D-arabino-heptonate contacts are provided by residues 263-267 and H270; that span reads RNLLN. H270 is a Zn(2+) binding site. The active-site Proton acceptor; for 3-dehydroquinate synthase activity is H274. Positions 286 and 355 each coordinate 7-phospho-2-dehydro-3-deoxy-D-arabino-heptonate. Residue H286 participates in Zn(2+) binding. Residues 396-840 form an EPSP synthase region; it reads VKDFNSAPST…WDILHTTFNV (445 aa). The active-site For EPSP synthase activity is the C822. Residues 859-1049 form a shikimate kinase region; the sequence is DKSIIVIGMR…IPNGRSAFVC (191 aa). 866–873 lines the ATP pocket; sequence GMRAAGKS. The 3-dehydroquinase stretch occupies residues 1050-1261; it reads LTYEDLAPVS…AAPGQLTLKE (212 aa). Residue H1166 is the Proton acceptor; for 3-dehydroquinate dehydratase activity of the active site. The Schiff-base intermediate with substrate; for 3-dehydroquinate dehydratase activity role is filled by K1195. Positions 1274 to 1545 are shikimate dehydrogenase; it reads RKKFYIVGKP…GYQFSSHIDL (272 aa).

In the N-terminal section; belongs to the sugar phosphate cyclases superfamily. Dehydroquinate synthase family. The protein in the 2nd section; belongs to the EPSP synthase family. This sequence in the 3rd section; belongs to the shikimate kinase family. It in the 4th section; belongs to the type-I 3-dehydroquinase family. In the C-terminal section; belongs to the shikimate dehydrogenase family. As to quaternary structure, homodimer. Zn(2+) is required as a cofactor.

The protein localises to the cytoplasm. It carries out the reaction 7-phospho-2-dehydro-3-deoxy-D-arabino-heptonate = 3-dehydroquinate + phosphate. It catalyses the reaction 3-dehydroquinate = 3-dehydroshikimate + H2O. The enzyme catalyses shikimate + NADP(+) = 3-dehydroshikimate + NADPH + H(+). The catalysed reaction is shikimate + ATP = 3-phosphoshikimate + ADP + H(+). It carries out the reaction 3-phosphoshikimate + phosphoenolpyruvate = 5-O-(1-carboxyvinyl)-3-phosphoshikimate + phosphate. Its pathway is metabolic intermediate biosynthesis; chorismate biosynthesis; chorismate from D-erythrose 4-phosphate and phosphoenolpyruvate: step 2/7. The protein operates within metabolic intermediate biosynthesis; chorismate biosynthesis; chorismate from D-erythrose 4-phosphate and phosphoenolpyruvate: step 3/7. It participates in metabolic intermediate biosynthesis; chorismate biosynthesis; chorismate from D-erythrose 4-phosphate and phosphoenolpyruvate: step 4/7. It functions in the pathway metabolic intermediate biosynthesis; chorismate biosynthesis; chorismate from D-erythrose 4-phosphate and phosphoenolpyruvate: step 5/7. Its pathway is metabolic intermediate biosynthesis; chorismate biosynthesis; chorismate from D-erythrose 4-phosphate and phosphoenolpyruvate: step 6/7. In terms of biological role, the AROM polypeptide catalyzes 5 consecutive enzymatic reactions in prechorismate polyaromatic amino acid biosynthesis. This chain is Pentafunctional AROM polypeptide, found in Komagataella phaffii (strain GS115 / ATCC 20864) (Yeast).